The sequence spans 254 residues: Insulin-like growth factor-binding protein 4 (254 aa).

The first 21 residues, 1–21 (MLPFGLVAALLLAAGPRPSLG), serve as a signal peptide directing secretion. One can recognise an IGFBP N-terminal domain in the interval 23-103 (EAIHCPPCSE…MHGQGVCTEL (81 aa)). Cystine bridges form between Cys-27-Cys-53, Cys-30-Cys-55, Cys-38-Cys-56, Cys-44-Cys-59, Cys-67-Cys-80, and Cys-74-Cys-100. Asn-125 is a glycosylation site (N-linked (GlcNAc...) asparagine). An intrachain disulfide couples Cys-131 to Cys-138. Residues 149-169 (RSKMKVVGTPREEPRPVPQGS) form a disordered region. Positions 167–245 (QGSCQSELHR…GLEPKGELDC (79 aa)) constitute a Thyroglobulin type-1 domain. 3 cysteine pairs are disulfide-bonded: Cys-170–Cys-200, Cys-211–Cys-222, and Cys-224–Cys-245. Residue Ser-251 is modified to Phosphoserine.

Binds IGF2 more than IGF1.

The protein localises to the secreted. Functionally, IGF-binding proteins prolong the half-life of the IGFs and have been shown to either inhibit or stimulate the growth promoting effects of the IGFs on cell culture. They alter the interaction of IGFs with their cell surface receptors. In Rattus norvegicus (Rat), this protein is Insulin-like growth factor-binding protein 4 (Igfbp4).